Reading from the N-terminus, the 566-residue chain is Ubiquitin carboxyl-terminal hydrolase 21 (566 aa).

Basic and acidic residues-rich tracts occupy residues 1-14 (MPQASEHRLGRTRE) and 58-70 (PPDERLKKLELGR). 2 disordered regions span residues 1–103 (MPQA…LPLP) and 146–169 (PEPPTLRRSTSLRRLGGFPGPPTL). Low complexity-rich tracts occupy residues 71 to 81 (GRTSGSRPRGP) and 151 to 160 (LRRSTSLRRL). Positions 134–152 (ELGAALSRLALRPEPPTLR) match the Nuclear export signal motif. Positions 212–559 (VGLRNLGNTC…EGYVLFYQLM (348 aa)) constitute a USP domain. The active-site Nucleophile is the C221. The interval 324–349 (APPILASGPVPSPPRRGGGALHEEPE) is disordered. Zn(2+) contacts are provided by C385, C388, C438, and C441. Residue H519 is the Proton acceptor of the active site.

Belongs to the peptidase C19 family. USP21 subfamily. In terms of assembly, interacts with BEND3.

Its subcellular location is the cytoplasm. The protein localises to the nucleus. The catalysed reaction is Thiol-dependent hydrolysis of ester, thioester, amide, peptide and isopeptide bonds formed by the C-terminal Gly of ubiquitin (a 76-residue protein attached to proteins as an intracellular targeting signal).. Deubiquitinates histone H2A, a specific tag for epigenetic transcriptional repression, thereby acting as a coactivator. Deubiquitination of histone H2A releaves the repression of di- and trimethylation of histone H3 at 'Lys-4', resulting in regulation of transcriptional initiation. Regulates gene expression via histone H2A deubiquitination. Deubiquitinates BAZ2A/TIP5 leading to its stabilization. Also capable of removing NEDD8 from NEDD8 conjugates but has no effect on Sentrin-1 conjugates. Also acts as a negative regulator of the ribosome quality control (RQC) by mediating deubiquitination of 40S ribosomal proteins RPS10/eS10 and RPS20/uS10, thereby antagonizing ZNF598-mediated 40S ubiquitination. The protein is Ubiquitin carboxyl-terminal hydrolase 21 of Mus musculus (Mouse).